Consider the following 162-residue polypeptide: Translocator protein 2 (162 aa).

5 helical membrane-spanning segments follow: residues 3-23 (LQGP…CMLI), 44-64 (VILL…YLVW), 79-99 (LGLY…FLAA), 103-123 (GLAL…VFIW), and 129-149 (LAAL…AITY).

The protein belongs to the TspO/BZRP family. As to quaternary structure, homotetramer. May also form homodimer. As to expression, expressed in liver, bone marrow and spleen. In spleen, detected in red pulp but not in white pulp.

It is found in the endoplasmic reticulum membrane. It localises to the cell membrane. In terms of biological role, cholesterol-binding protein involved in the redistribution of cholesterol from lipid droplets to the endoplasmic reticulum. Required to meet cholesterol demands during erythropoietic differentiation. May play a role in transport processes at the plasma membrane of erythrocytes, including regulating VDAC-mediated ATP export, and import of the heme precursors protoporphyrin IX and 5-aminolevulinic acid. The sequence is that of Translocator protein 2 (Tspo2) from Mus musculus (Mouse).